The sequence spans 441 residues: ACT domain-containing protein ACR8 (441 aa).

4 ACT domains span residues 34–110 (IVKV…NIEV), 115–196 (ALEL…SAAK), 248–324 (VVNV…ALEG), and 326–405 (RLEL…TMYH).

As to expression, expressed in roots, leaves, flowers and siliques.

May bind amino acids. This is ACT domain-containing protein ACR8 from Arabidopsis thaliana (Mouse-ear cress).